The primary structure comprises 467 residues: Cysteine protease ATG4a (467 aa).

The interval 1–35 is disordered; it reads MKALCDRFVPQQCSSSSKSDTHDKSPLVSDSGPSD. The Nucleophile role is filled by Cys-170. Catalysis depends on residues Asp-364 and His-366. Residues 448 to 467 are disordered; sequence NYGFADDDSEDEREDDWQML. A compositionally biased stretch (acidic residues) spans 452 to 467; sequence ADDDSEDEREDDWQML.

This sequence belongs to the peptidase C54 family. As to quaternary structure, interacts with ATG8. In terms of tissue distribution, constitutively expressed.

The protein localises to the cytoplasm. The enzyme catalyses [protein]-C-terminal L-amino acid-glycyl-phosphatidylethanolamide + H2O = [protein]-C-terminal L-amino acid-glycine + a 1,2-diacyl-sn-glycero-3-phosphoethanolamine. Cysteine protease that plays a key role in autophagy by mediating both proteolytic activation and delipidation of ATG8 family proteins. The protease activity is required for proteolytic activation of ATG8 family proteins: cleaves the C-terminal amino acid of ATG8 proteins to reveal a C-terminal glycine. Exposure of the glycine at the C-terminus is essential for ATG8 proteins conjugation to phosphatidylethanolamine (PE) and insertion to membranes, which is necessary for autophagy. In addition to the protease activity, also mediates delipidation of PE-conjugated ATG8 proteins. The sequence is that of Cysteine protease ATG4a from Arabidopsis thaliana (Mouse-ear cress).